Here is a 230-residue protein sequence, read N- to C-terminus: C-methyltransferase CouO (230 aa).

It belongs to the methyltransferase superfamily.

It participates in antibiotic biosynthesis. Functionally, mediates C-methylation at the 8-position of the aminocoumarin moieties in coumermycin A1 in the biosynthetic pathway of coumermycin antibiotic. Active on both mono- and bis-amides for mono- and di-C-methylation adjacent to the phenolic hydroxyl before it is glycosylated by CouM. The sequence is that of C-methyltransferase CouO (couO) from Streptomyces rishiriensis.